Reading from the N-terminus, the 41-residue chain is Bacteriocin bavaricin-A (41 aa).

This sequence belongs to the bacteriocin class IIA/YGNGV family.

It is found in the secreted. This heat stable bacteriocin shows activity against species of Lactobacillus, Listeria monocytogenes, Pediococcus, Enterococcus, Leuconostoc and Lactococcus. This Latilactobacillus sakei (Lactobacillus sakei) protein is Bacteriocin bavaricin-A.